The following is a 589-amino-acid chain: Serine/threonine-protein phosphatase 2A 65 kDa regulatory subunit A alpha isoform (589 aa).

Ala2 is modified (N-acetylalanine). HEAT repeat units lie at residues 8–46 (DSLY…GVER), 47–84 (TRSE…GGPE), 85–123 (YVHC…SPSD), 124–161 (LEAH…VSSA), 162–200 (VKAE…ELDN), 201–239 (VKSE…PQED), 240–278 (LEAL…GPEI), 279–321 (TKTD…RENV), 322–360 (IMTQ…GKDS), 361–399 (TIEH…GIRQ), 400–438 (LSQS…GVEF), 439–477 (FDEK…GKEW), 478–516 (AHAT…GQDI), 517–555 (TTKH…DNST), and 556–589 (LQSE…LSLA). The PP2A subunit B binding stretch occupies residues 8–399 (DSLYPIAVLI…CVNEVIGIRQ (392 aa)). A polyoma small and medium T antigens Binding region spans residues 47–321 (TRSELLPFLT…NLSADCRENV (275 aa)). The interval 85–239 (YVHCLLPPLE…NIAQLLPQED (155 aa)) is SV40 small T antigen binding. The residue at position 280 (Lys280) is an N6-acetyllysine. The PP2A subunit C binding stretch occupies residues 400–589 (LSQSLLPAIV…QEALTVLSLA (190 aa)).

Belongs to the phosphatase 2A regulatory subunit A family. As to quaternary structure, PP2A consists of a common heterodimeric core enzyme, composed of PPP2CA a 36 kDa catalytic subunit (subunit C) and PPP2R1A a 65 kDa constant regulatory subunit (PR65 or subunit A), that associates with a variety of regulatory subunits. Proteins that associate with the core dimer include three families of regulatory subunits B (the R2/B/PR55/B55, R3/B''/PR72/PR130/PR59 and R5/B'/B56 families), the 48 kDa variable regulatory subunit, viral proteins, and cell signaling molecules. Found in a complex with at least ARL2, PPP2CB, PPP2R1A, PPP2R2A, PPP2R5E and TBCD. Interacts with the PP2A C catalytic subunit PPP2CA. Interacts with the PP2A B subunit PPP2R2A. Interacts with the PP2A B subunit PPP2R5D. Interacts with FOXO1; the interaction dephosphorylates FOXO1 on AKT-mediated phosphorylation sites. Interacts with IPO9. Interacts with TP53 and SGO1. Interacts with PLA2G16; this interaction might decrease PP2A activity. Interacts with CTTNBP2NL. Interacts with GNA12; the interaction promotes protein phosphatase 2A activation causing dephosphorylation of MAPT. Interacts with CIP2A; this interaction stabilizes CIP2A. Interacts with PABIR1/FAM122A. Interacts with ADCY8; antagonizes interaction between ADCY8 and calmodulin. Interacts with CRTC3 (when phosphorylated at 'Ser-391'). Interacts with SPRY2. Part of the core of STRIPAK complexes composed of PP2A catalytic and scaffolding subunits, the striatins (PP2A regulatory subunits), the striatin-associated proteins MOB4, STRIP1 and STRIP2, PDCD10 and members of the STE20 kinases, such as STK24 and STK26. Component of the Integrator-PP2A (INTAC) complex, composed of the Integrator core complex and protein phosphatase 2A subunits PPP2CA and PPP2R1A.

It is found in the cytoplasm. It localises to the nucleus. The protein localises to the chromosome. Its subcellular location is the centromere. The protein resides in the lateral cell membrane. It is found in the cell projection. It localises to the dendrite. In terms of biological role, the PR65 subunit of protein phosphatase 2A serves as a scaffolding molecule to coordinate the assembly of the catalytic subunit and a variable regulatory B subunit. Upon interaction with GNA12 promotes dephosphorylation of microtubule associated protein TAU/MAPT. Required for proper chromosome segregation and for centromeric localization of SGO1 in mitosis. Together with RACK1 adapter, mediates dephosphorylation of AKT1 at 'Ser-473', preventing AKT1 activation and AKT-mTOR signaling pathway. Dephosphorylation of AKT1 is essential for regulatory T-cells (Treg) homeostasis and stability. Part of the striatin-interacting phosphatase and kinase (STRIPAK) complexes. STRIPAK complexes have critical roles in protein (de)phosphorylation and are regulators of multiple signaling pathways including Hippo, MAPK, nuclear receptor and cytoskeleton remodeling. Different types of STRIPAK complexes are involved in a variety of biological processes such as cell growth, differentiation, apoptosis, metabolism and immune regulation. Key mediator of a quality checkpoint during transcription elongation as part of the Integrator-PP2A (INTAC) complex. The INTAC complex drives premature transcription termination of transcripts that are unfavorably configured for transcriptional elongation: within the INTAC complex, acts as a scaffolding subunit for PPP2CA, which catalyzes dephosphorylation of the C-terminal domain (CTD) of Pol II subunit POLR2A/RPB1 and SUPT5H/SPT5, thereby preventing transcriptional elongation. Regulates the recruitment of the SKA complex to kinetochores. This Bos taurus (Bovine) protein is Serine/threonine-protein phosphatase 2A 65 kDa regulatory subunit A alpha isoform (PPP2R1A).